The chain runs to 612 residues: UvrABC system protein C (612 aa).

A GIY-YIG domain is found at 20 to 98; the sequence is THSGVYRMLD…IKQHRPKYNI (79 aa). A UVR domain is found at 208-243; that stretch reads SSVLEEISAKMYQASEDMEYEKAQVYRDQLVILRKL.

The protein belongs to the UvrC family. As to quaternary structure, interacts with UvrB in an incision complex.

Its subcellular location is the cytoplasm. Functionally, the UvrABC repair system catalyzes the recognition and processing of DNA lesions. UvrC both incises the 5' and 3' sides of the lesion. The N-terminal half is responsible for the 3' incision and the C-terminal half is responsible for the 5' incision. This is UvrABC system protein C from Francisella philomiragia subsp. philomiragia (strain ATCC 25017 / CCUG 19701 / FSC 153 / O#319-036).